We begin with the raw amino-acid sequence, 482 residues long: Glutamyl-tRNA(Gln) amidotransferase subunit A (482 aa).

Active-site charge relay system residues include Lys75 and Ser150. Residue Ser174 is the Acyl-ester intermediate of the active site.

The protein belongs to the amidase family. GatA subfamily. In terms of assembly, heterotrimer of A, B and C subunits.

The catalysed reaction is L-glutamyl-tRNA(Gln) + L-glutamine + ATP + H2O = L-glutaminyl-tRNA(Gln) + L-glutamate + ADP + phosphate + H(+). In terms of biological role, allows the formation of correctly charged Gln-tRNA(Gln) through the transamidation of misacylated Glu-tRNA(Gln) in organisms which lack glutaminyl-tRNA synthetase. The reaction takes place in the presence of glutamine and ATP through an activated gamma-phospho-Glu-tRNA(Gln). This Acaryochloris marina (strain MBIC 11017) protein is Glutamyl-tRNA(Gln) amidotransferase subunit A.